The chain runs to 1242 residues: DNA polymerase catalytic subunit (1242 aa).

4 disordered regions span residues 14-38 (GAVA…RPPQ), 644-665 (LQSA…SSSS), 877-898 (EGDS…GGSN), and 1108-1163 (TAPQ…KPPS). Positions 653-665 (GVSPGSGSNSSSS) are enriched in low complexity. A compositionally biased stretch (polar residues) spans 1110–1119 (PQGSSDNGDS). Residues 1145–1155 (ESNRRGGEPAK) are compositionally biased toward basic and acidic residues.

Belongs to the DNA polymerase type-B family. As to quaternary structure, forms a complex with the ssDNA-binding protein UL57, the DNA polymerase processivity factor UL44, and the alkaline exonuclease UL98. Interacts with the putative helicase-primase complex composed of UL70, UL102 and UL105 proteins; these interactions may coordinate leading and lagging strand DNA synthesis at the replication fork.

It localises to the host nucleus. It carries out the reaction DNA(n) + a 2'-deoxyribonucleoside 5'-triphosphate = DNA(n+1) + diphosphate. Its function is as follows. Replicates viral genomic DNA in the late phase of lytic infection, producing long concatemeric DNA. The replication complex is composed of six viral proteins: the DNA polymerase, processivity factor, primase, primase-associated factor, helicase, and ssDNA-binding protein. This chain is DNA polymerase catalytic subunit (UL54), found in Homo sapiens (Human).